Here is a 280-residue protein sequence, read N- to C-terminus: UPF0758 protein Atu1607 (280 aa).

The interval 1 to 22 (MAKRPALPSADLSPTSGFEAGE) is disordered. Positions 158–280 (VLGSWSSVID…HASFKGLRLI (123 aa)) constitute an MPN domain. The Zn(2+) site is built by H229, H231, and D242. Residues 229-242 (HNHPSGDPTPSRAD) carry the JAMM motif motif.

It belongs to the UPF0758 family.

This Agrobacterium fabrum (strain C58 / ATCC 33970) (Agrobacterium tumefaciens (strain C58)) protein is UPF0758 protein Atu1607.